The sequence spans 394 residues: 1-deoxy-D-xylulose 5-phosphate reductoisomerase (394 aa).

6 residues coordinate NADPH: T28, G29, S30, I31, N57, and N133. Residue K134 participates in 1-deoxy-D-xylulose 5-phosphate binding. E135 contacts NADPH. D157 contacts Mn(2+). Residues S158, E159, S183, and H206 each contribute to the 1-deoxy-D-xylulose 5-phosphate site. A Mn(2+)-binding site is contributed by E159. G212 contacts NADPH. 4 residues coordinate 1-deoxy-D-xylulose 5-phosphate: S219, N224, K225, and E228. E228 is a binding site for Mn(2+).

The protein belongs to the DXR family. Requires Mg(2+) as cofactor. Mn(2+) is required as a cofactor.

The catalysed reaction is 2-C-methyl-D-erythritol 4-phosphate + NADP(+) = 1-deoxy-D-xylulose 5-phosphate + NADPH + H(+). The protein operates within isoprenoid biosynthesis; isopentenyl diphosphate biosynthesis via DXP pathway; isopentenyl diphosphate from 1-deoxy-D-xylulose 5-phosphate: step 1/6. Functionally, catalyzes the NADPH-dependent rearrangement and reduction of 1-deoxy-D-xylulose-5-phosphate (DXP) to 2-C-methyl-D-erythritol 4-phosphate (MEP). The chain is 1-deoxy-D-xylulose 5-phosphate reductoisomerase from Nocardia farcinica (strain IFM 10152).